A 144-amino-acid chain; its full sequence is Large ribosomal subunit protein uL16 (144 aa).

Basic residues predominate over residues 1 to 17 (MLQPKKTKFRRQQKGRA). The segment at 1–22 (MLQPKKTKFRRQQKGRAKGNAQ) is disordered.

It belongs to the universal ribosomal protein uL16 family. As to quaternary structure, part of the 50S ribosomal subunit.

Binds 23S rRNA and is also seen to make contacts with the A and possibly P site tRNAs. The protein is Large ribosomal subunit protein uL16 of Bacteroides thetaiotaomicron (strain ATCC 29148 / DSM 2079 / JCM 5827 / CCUG 10774 / NCTC 10582 / VPI-5482 / E50).